The sequence spans 95 residues: Aspartyl/glutamyl-tRNA(Asn/Gln) amidotransferase subunit C (95 aa).

The protein belongs to the GatC family. In terms of assembly, heterotrimer of A, B and C subunits.

The catalysed reaction is L-glutamyl-tRNA(Gln) + L-glutamine + ATP + H2O = L-glutaminyl-tRNA(Gln) + L-glutamate + ADP + phosphate + H(+). It carries out the reaction L-aspartyl-tRNA(Asn) + L-glutamine + ATP + H2O = L-asparaginyl-tRNA(Asn) + L-glutamate + ADP + phosphate + 2 H(+). Functionally, allows the formation of correctly charged Asn-tRNA(Asn) or Gln-tRNA(Gln) through the transamidation of misacylated Asp-tRNA(Asn) or Glu-tRNA(Gln) in organisms which lack either or both of asparaginyl-tRNA or glutaminyl-tRNA synthetases. The reaction takes place in the presence of glutamine and ATP through an activated phospho-Asp-tRNA(Asn) or phospho-Glu-tRNA(Gln). This Lysinibacillus sphaericus (strain C3-41) protein is Aspartyl/glutamyl-tRNA(Asn/Gln) amidotransferase subunit C.